Consider the following 140-residue polypeptide: 3-hydroxyacyl-[acyl-carrier-protein] dehydratase FabZ (140 aa).

H47 is a catalytic residue.

It belongs to the thioester dehydratase family. FabZ subfamily.

It localises to the cytoplasm. The enzyme catalyses a (3R)-hydroxyacyl-[ACP] = a (2E)-enoyl-[ACP] + H2O. Functionally, involved in unsaturated fatty acids biosynthesis. Catalyzes the dehydration of short chain beta-hydroxyacyl-ACPs and long chain saturated and unsaturated beta-hydroxyacyl-ACPs. The chain is 3-hydroxyacyl-[acyl-carrier-protein] dehydratase FabZ from Streptococcus pneumoniae (strain CGSP14).